The sequence spans 315 residues: Olfactory receptor 3A1 (315 aa).

The Extracellular segment spans residues Met1 to Pro28. Asn8 is a glycosylation site (N-linked (GlcNAc...) asparagine). Residues Val29–Val52 form a helical membrane-spanning segment. Topologically, residues Leu53–Thr60 are cytoplasmic. A helical transmembrane segment spans residues Pro61–Pro82. Residues Ser83–Gln103 lie on the Extracellular side of the membrane. The cysteines at positions 100 and 192 are disulfide-linked. Residues Leu104–Tyr123 form a helical membrane-spanning segment. Over Asp124–Val143 the chain is Cytoplasmic. A helical membrane pass occupies residues Gln144–Thr161. Topologically, residues His162–Glu199 are extracellular. A helical transmembrane segment spans residues Leu200–His223. At Val224–Ala240 the chain is on the cytoplasmic side. Residues Phe241–Arg264 form a helical membrane-spanning segment. The Extracellular portion of the chain corresponds to Leu265 to Lys275. Residues Ala276–Phe295 form a helical membrane-spanning segment. Topologically, residues Arg296–Ala315 are cytoplasmic.

Belongs to the G-protein coupled receptor 1 family.

The protein localises to the cell membrane. In terms of biological role, odorant receptor. The polypeptide is Olfactory receptor 3A1 (OR3A1) (Gorilla gorilla gorilla (Western lowland gorilla)).